A 142-amino-acid polypeptide reads, in one-letter code: uncharacterized protein (142 aa).

The Peptidase C39 domain occupies 18 to 137 (QSSGYSCGPA…KIFTGNVLVV (120 aa)).

This is an uncharacterized protein from Methanothermobacter marburgensis (strain ATCC BAA-927 / DSM 2133 / JCM 14651 / NBRC 100331 / OCM 82 / Marburg) (Methanobacterium thermoautotrophicum).